A 660-amino-acid chain; its full sequence is Threonine--tRNA ligase (660 aa).

In terms of domain architecture, TGS spans 1 to 64 (MSHSVSLTFP…TEGRIEIVTR (64 aa)). The tract at residues 245–547 (DHRRLGREMD…LLENFAGHMP (303 aa)) is catalytic. The Zn(2+) site is built by cysteine 341, histidine 392, and histidine 524.

The protein belongs to the class-II aminoacyl-tRNA synthetase family. Homodimer. Zn(2+) serves as cofactor.

It is found in the cytoplasm. The catalysed reaction is tRNA(Thr) + L-threonine + ATP = L-threonyl-tRNA(Thr) + AMP + diphosphate + H(+). Its function is as follows. Catalyzes the attachment of threonine to tRNA(Thr) in a two-step reaction: L-threonine is first activated by ATP to form Thr-AMP and then transferred to the acceptor end of tRNA(Thr). Also edits incorrectly charged L-seryl-tRNA(Thr). This is Threonine--tRNA ligase from Sinorhizobium medicae (strain WSM419) (Ensifer medicae).